A 426-amino-acid polypeptide reads, in one-letter code: Glutamyl-tRNA reductase (426 aa).

Residues 49 to 52, Ser101, 106 to 108, and Gln112 each bind substrate; these read TCNR and EPQ. The active-site Nucleophile is Cys50. NADP(+) is bound at residue 181–186; sequence GAGETI. The segment at 404–426 is disordered; sequence DRLFPEKPGLPTSPHSYPDREDR.

It belongs to the glutamyl-tRNA reductase family. Homodimer.

It catalyses the reaction (S)-4-amino-5-oxopentanoate + tRNA(Glu) + NADP(+) = L-glutamyl-tRNA(Glu) + NADPH + H(+). The protein operates within porphyrin-containing compound metabolism; protoporphyrin-IX biosynthesis; 5-aminolevulinate from L-glutamyl-tRNA(Glu): step 1/2. Catalyzes the NADPH-dependent reduction of glutamyl-tRNA(Glu) to glutamate 1-semialdehyde (GSA). This Xanthomonas campestris pv. phaseoli protein is Glutamyl-tRNA reductase.